A 562-amino-acid polypeptide reads, in one-letter code: Malate synthase (562 aa).

Catalysis depends on arginine 177, which acts as the Proton acceptor. Catalysis depends on aspartate 463, which acts as the Proton donor. The Microbody targeting signal signature appears at 560 to 562 (SRL).

It belongs to the malate synthase family.

The protein localises to the glyoxysome. It carries out the reaction glyoxylate + acetyl-CoA + H2O = (S)-malate + CoA + H(+). The protein operates within carbohydrate metabolism; glyoxylate cycle; (S)-malate from isocitrate: step 2/2. Does not seem to be essential for lipid utilization and gluconeogenesis in seedlings. The sequence is that of Malate synthase from Arabidopsis thaliana (Mouse-ear cress).